Consider the following 427-residue polypeptide: Histidine--tRNA ligase (427 aa).

It belongs to the class-II aminoacyl-tRNA synthetase family. Homodimer.

The protein resides in the cytoplasm. The enzyme catalyses tRNA(His) + L-histidine + ATP = L-histidyl-tRNA(His) + AMP + diphosphate + H(+). In Streptococcus suis (strain 98HAH33), this protein is Histidine--tRNA ligase.